The chain runs to 768 residues: uncharacterized protein (768 aa).

This sequence to E.coli YkiA.

This is an uncharacterized protein from Escherichia coli (strain K12).